The following is a 138-amino-acid chain: Sec-independent protein translocase protein TatB (138 aa).

The helical transmembrane segment at 2–18 threads the bilayer; sequence SFGEIIVILVVAILVLG. The segment at 109–138 is disordered; it reads NNLSGQNLNTEEKPNLSKLETQDKNGKINV. The span at 118–138 shows a compositional bias: basic and acidic residues; that stretch reads TEEKPNLSKLETQDKNGKINV.

Belongs to the TatB family. As to quaternary structure, the Tat system comprises two distinct complexes: a TatABC complex, containing multiple copies of TatA, TatB and TatC subunits, and a separate TatA complex, containing only TatA subunits. Substrates initially bind to the TatABC complex, which probably triggers association of the separate TatA complex to form the active translocon.

The protein localises to the cell inner membrane. In terms of biological role, part of the twin-arginine translocation (Tat) system that transports large folded proteins containing a characteristic twin-arginine motif in their signal peptide across membranes. Together with TatC, TatB is part of a receptor directly interacting with Tat signal peptides. TatB may form an oligomeric binding site that transiently accommodates folded Tat precursor proteins before their translocation. The chain is Sec-independent protein translocase protein TatB from Campylobacter jejuni subsp. jejuni serotype O:2 (strain ATCC 700819 / NCTC 11168).